The sequence spans 378 residues: S-adenosylmethionine:tRNA ribosyltransferase-isomerase (378 aa).

The protein belongs to the QueA family. Monomer.

The protein localises to the cytoplasm. The catalysed reaction is 7-aminomethyl-7-carbaguanosine(34) in tRNA + S-adenosyl-L-methionine = epoxyqueuosine(34) in tRNA + adenine + L-methionine + 2 H(+). Its pathway is tRNA modification; tRNA-queuosine biosynthesis. Transfers and isomerizes the ribose moiety from AdoMet to the 7-aminomethyl group of 7-deazaguanine (preQ1-tRNA) to give epoxyqueuosine (oQ-tRNA). The chain is S-adenosylmethionine:tRNA ribosyltransferase-isomerase from Prochlorococcus marinus (strain MIT 9312).